Consider the following 289-residue polypeptide: Glycerol facilitator-aquaporin gla (289 aa).

2 consecutive transmembrane segments (helical) span residues 10–30 (ITEFVGTALLIIMGNGAVANV) and 41–61 (SWMIIGWGYGLGVMLPAVAFG). Positions 68–70 (NPA) match the NPA 1 motif. 3 helical membrane-spanning segments follow: residues 87–107 (AQYIIAQVLGAMFGQLLIVMV), 151–171 (FLGSFVLFFGAVAATNIFFGS), and 209–229 (MIAHLFLGFLVMGLVVALGGP). The NPA 2 signature appears at 235 to 237 (NPA). The chain crosses the membrane as a helical span at residues 264–284 (WYAWVPVLAPILASLAAVALF).

The protein belongs to the MIP/aquaporin (TC 1.A.8) family.

Its subcellular location is the cell membrane. In terms of biological role, mixed channel protein that transports both water and glycerol. The sequence is that of Glycerol facilitator-aquaporin gla (gla) from Lactococcus lactis subsp. cremoris (Streptococcus cremoris).